The following is a 258-amino-acid chain: Indole-3-glycerol phosphate synthase (258 aa).

It belongs to the TrpC family.

It carries out the reaction 1-(2-carboxyphenylamino)-1-deoxy-D-ribulose 5-phosphate + H(+) = (1S,2R)-1-C-(indol-3-yl)glycerol 3-phosphate + CO2 + H2O. It functions in the pathway amino-acid biosynthesis; L-tryptophan biosynthesis; L-tryptophan from chorismate: step 4/5. This Campylobacter jejuni subsp. doylei (strain ATCC BAA-1458 / RM4099 / 269.97) protein is Indole-3-glycerol phosphate synthase.